We begin with the raw amino-acid sequence, 72 residues long: Protein kish (72 aa).

An N-terminal signal peptide occupies residues 1–26 (MVAIFNFQSLLVVILLFICTCTYIRG). Topologically, residues 27–47 (SYPSLLEVRDKHSFSGLPRKA) are extracellular. Residues 48–68 (AIIGERLSPWVSACCLIMGLW) traverse the membrane as a helical segment. At 69–72 (TLYN) the chain is on the cytoplasmic side.

Belongs to the KISH family.

It is found in the golgi apparatus membrane. Functionally, involved in the early part of the secretory pathway. This Dictyostelium discoideum (Social amoeba) protein is Protein kish (tmem167).